The following is a 504-amino-acid chain: Probable cytosol aminopeptidase (504 aa).

Mn(2+) is bound by residues Lys276 and Asp281. Residue Lys288 is part of the active site. Positions 299, 358, and 360 each coordinate Mn(2+). Arg362 is an active-site residue.

The protein belongs to the peptidase M17 family. Mn(2+) is required as a cofactor.

It is found in the cytoplasm. The catalysed reaction is Release of an N-terminal amino acid, Xaa-|-Yaa-, in which Xaa is preferably Leu, but may be other amino acids including Pro although not Arg or Lys, and Yaa may be Pro. Amino acid amides and methyl esters are also readily hydrolyzed, but rates on arylamides are exceedingly low.. It catalyses the reaction Release of an N-terminal amino acid, preferentially leucine, but not glutamic or aspartic acids.. Its function is as follows. Presumably involved in the processing and regular turnover of intracellular proteins. Catalyzes the removal of unsubstituted N-terminal amino acids from various peptides. This Bordetella avium (strain 197N) protein is Probable cytosol aminopeptidase.